Reading from the N-terminus, the 227-residue chain is Ribonuclease 3 (227 aa).

Positions 3–130 constitute an RNase III domain; that stretch reads TNAISKIIKY…LIGAIYLDGG (128 aa). Glutamate 43 contacts Mg(2+). The active site involves aspartate 47. Residues asparagine 116 and glutamate 119 each contribute to the Mg(2+) site. The active site involves glutamate 119. Residues 155–224 enclose the DRBM domain; sequence DAKTILQEWA…ASLMLAKINY (70 aa).

Belongs to the ribonuclease III family. In terms of assembly, homodimer. The cofactor is Mg(2+).

The protein localises to the cytoplasm. It catalyses the reaction Endonucleolytic cleavage to 5'-phosphomonoester.. Functionally, digests double-stranded RNA. Involved in the processing of primary rRNA transcript to yield the immediate precursors to the large and small rRNAs (23S and 16S). Processes some mRNAs, and tRNAs when they are encoded in the rRNA operon. Processes pre-crRNA and tracrRNA of type II CRISPR loci if present in the organism. In Ehrlichia ruminantium (strain Gardel), this protein is Ribonuclease 3.